Consider the following 499-residue polypeptide: Glycerol kinase (499 aa).

An ADP-binding site is contributed by Thr-13. ATP is bound by residues Thr-13, Thr-14, and Ser-15. Thr-13 provides a ligand contact to sn-glycerol 3-phosphate. Residue Arg-17 participates in ADP binding. The sn-glycerol 3-phosphate site is built by Arg-83, Glu-84, Tyr-135, and Asp-244. 5 residues coordinate glycerol: Arg-83, Glu-84, Tyr-135, Asp-244, and Gln-245. ADP is bound by residues Thr-266 and Gly-309. The ATP site is built by Thr-266, Gly-309, Gln-313, and Gly-410. Residues Gly-410 and Asn-414 each contribute to the ADP site.

Belongs to the FGGY kinase family.

It catalyses the reaction glycerol + ATP = sn-glycerol 3-phosphate + ADP + H(+). It participates in polyol metabolism; glycerol degradation via glycerol kinase pathway; sn-glycerol 3-phosphate from glycerol: step 1/1. With respect to regulation, inhibited by fructose 1,6-bisphosphate (FBP). Its function is as follows. Key enzyme in the regulation of glycerol uptake and metabolism. Catalyzes the phosphorylation of glycerol to yield sn-glycerol 3-phosphate. In Paraburkholderia xenovorans (strain LB400), this protein is Glycerol kinase.